The sequence spans 357 residues: UDP-N-acetylglucosamine--N-acetylmuramyl-(pentapeptide) pyrophosphoryl-undecaprenol N-acetylglucosamine transferase (357 aa).

Residues 12–14 (TGG), N124, R163, S189, I243, 262–267 (ALTVSE), and Q288 each bind UDP-N-acetyl-alpha-D-glucosamine.

This sequence belongs to the glycosyltransferase 28 family. MurG subfamily.

The protein resides in the cell inner membrane. It catalyses the reaction di-trans,octa-cis-undecaprenyl diphospho-N-acetyl-alpha-D-muramoyl-L-alanyl-D-glutamyl-meso-2,6-diaminopimeloyl-D-alanyl-D-alanine + UDP-N-acetyl-alpha-D-glucosamine = di-trans,octa-cis-undecaprenyl diphospho-[N-acetyl-alpha-D-glucosaminyl-(1-&gt;4)]-N-acetyl-alpha-D-muramoyl-L-alanyl-D-glutamyl-meso-2,6-diaminopimeloyl-D-alanyl-D-alanine + UDP + H(+). The protein operates within cell wall biogenesis; peptidoglycan biosynthesis. Cell wall formation. Catalyzes the transfer of a GlcNAc subunit on undecaprenyl-pyrophosphoryl-MurNAc-pentapeptide (lipid intermediate I) to form undecaprenyl-pyrophosphoryl-MurNAc-(pentapeptide)GlcNAc (lipid intermediate II). The polypeptide is UDP-N-acetylglucosamine--N-acetylmuramyl-(pentapeptide) pyrophosphoryl-undecaprenol N-acetylglucosamine transferase (Pseudomonas paraeruginosa (strain DSM 24068 / PA7) (Pseudomonas aeruginosa (strain PA7))).